Here is a 189-residue protein sequence, read N- to C-terminus: Recombination protein RecR (189 aa).

The segment at 48–63 (CQTCFHLSAEPLCDIC) adopts a C4-type zinc-finger fold. The Toprim domain maps to 71-165 (QLLCVVADSR…QVSRIAYGLP (95 aa)).

This sequence belongs to the RecR family.

May play a role in DNA repair. It seems to be involved in an RecBC-independent recombinational process of DNA repair. It may act with RecF and RecO. The protein is Recombination protein RecR of Prochlorococcus marinus (strain MIT 9303).